Consider the following 82-residue polypeptide: Cytochrome c-551 (82 aa).

Heme c-binding residues include Cys-12, Cys-15, His-16, and Met-61.

In terms of processing, binds 1 heme c group covalently per subunit.

Its function is as follows. This is a prokaryotic monoheme cytochrome, unreactive with mitochondrial cytochrome C oxidase or reductase. It functions in nitrite and nitrate respiration in Pseudomonas, but it is also found in other bacteria. This chain is Cytochrome c-551, found in Pseudomonas denitrificans.